Consider the following 434-residue polypeptide: Beta-enolase (434 aa).

S2 carries the post-translational modification N-acetylserine. The substrate site is built by H158 and E167. Residue E210 is the Proton donor of the active site. Positions 245, 293, and 318 each coordinate Mg(2+). The substrate site is built by E293 and D318. K343 functions as the Proton acceptor in the catalytic mechanism. Residues 370-373 (SHRS) and K394 each bind substrate.

Belongs to the enolase family. As to quaternary structure, homodimer. Interacts with PNKD. It depends on Mg(2+) as a cofactor.

It localises to the cytoplasm. It carries out the reaction (2R)-2-phosphoglycerate = phosphoenolpyruvate + H2O. Its pathway is carbohydrate degradation; glycolysis; pyruvate from D-glyceraldehyde 3-phosphate: step 4/5. Glycolytic enzyme that catalyzes the conversion of 2-phosphoglycerate to phosphoenolpyruvate. This Gallus gallus (Chicken) protein is Beta-enolase (ENO3).